Here is a 271-residue protein sequence, read N- to C-terminus: Glutamate racemase (271 aa).

Residues 10-11 and 42-43 contribute to the substrate site; these read DS and YG. The active-site Proton donor/acceptor is Cys-73. 74–75 is a substrate binding site; it reads NT. Catalysis depends on Cys-183, which acts as the Proton donor/acceptor. Residue 184-185 participates in substrate binding; sequence TH.

It belongs to the aspartate/glutamate racemases family.

The enzyme catalyses L-glutamate = D-glutamate. It functions in the pathway cell wall biogenesis; peptidoglycan biosynthesis. Its function is as follows. Provides the (R)-glutamate required for cell wall biosynthesis. This is Glutamate racemase from Lactococcus lactis subsp. cremoris (strain MG1363).